We begin with the raw amino-acid sequence, 323 residues long: tRNA uridine(34) hydroxylase (323 aa).

The 95-residue stretch at 123–217 (SDPDVVVIDT…YLETIPEEES (95 aa)) folds into the Rhodanese domain. Catalysis depends on Cys177, which acts as the Cysteine persulfide intermediate.

It belongs to the TrhO family.

It carries out the reaction uridine(34) in tRNA + AH2 + O2 = 5-hydroxyuridine(34) in tRNA + A + H2O. Its function is as follows. Catalyzes oxygen-dependent 5-hydroxyuridine (ho5U) modification at position 34 in tRNAs. The polypeptide is tRNA uridine(34) hydroxylase (Methylobacillus flagellatus (strain ATCC 51484 / DSM 6875 / VKM B-1610 / KT)).